Consider the following 1116-residue polypeptide: MAP kinase kinase kinase mkh1 (1116 aa).

Disordered regions lie at residues 510 to 601 (LKMP…SNSL) and 618 to 647 (ALDE…ENHH). Residues 515 to 531 (NSGSSAPQSPSSNTSAS) are compositionally biased toward low complexity. Residues 553–569 (LRRKNTLTRRPSIRHAR) show a composition bias toward basic residues. Residues 588-601 (SFDPKASSKSSNSL) show a composition bias toward low complexity. A compositionally biased stretch (polar residues) spans 634–647 (PKQSSSQVPKENHH). The Protein kinase domain occupies 825-1094 (WMKGELIGNG…AEELLNHPFM (270 aa)). ATP contacts are provided by residues 831–839 (IGNGTYGKV) and lysine 854. Aspartate 955 serves as the catalytic Proton acceptor.

It belongs to the protein kinase superfamily. STE Ser/Thr protein kinase family. MAP kinase kinase kinase subfamily.

The enzyme catalyses L-seryl-[protein] + ATP = O-phospho-L-seryl-[protein] + ADP + H(+). It carries out the reaction L-threonyl-[protein] + ATP = O-phospho-L-threonyl-[protein] + ADP + H(+). May regulate cell morphology, cell wall integrity, salt resistance, cell cycle reentry from stationary-phase arrest, and filamentous growth in response to stress. Activates the MAP kinase kinase skh1/pek1 by phosphorylation. This Schizosaccharomyces pombe (strain 972 / ATCC 24843) (Fission yeast) protein is MAP kinase kinase kinase mkh1 (mkh1).